A 33-amino-acid polypeptide reads, in one-letter code: Cytochrome c oxidase subunit 5B liver, mitochondrial (33 aa).

This sequence belongs to the cytochrome c oxidase subunit 5B family. As to quaternary structure, component of the cytochrome c oxidase (complex IV, CIV), a multisubunit enzyme composed of 14 subunits. The complex is composed of a catalytic core of 3 subunits MT-CO1, MT-CO2 and MT-CO3, encoded in the mitochondrial DNA, and 11 supernumerary subunits COX4I, COX5A, COX5B, COX6A, COX6B, COX6C, COX7A, COX7B, COX7C, COX8 and NDUFA4, which are encoded in the nuclear genome. The complex exists as a monomer or a dimer and forms supercomplexes (SCs) in the inner mitochondrial membrane with NADH-ubiquinone oxidoreductase (complex I, CI) and ubiquinol-cytochrome c oxidoreductase (cytochrome b-c1 complex, complex III, CIII), resulting in different assemblies (supercomplex SCI(1)III(2)IV(1) and megacomplex MCI(2)III(2)IV(2)).

The protein localises to the mitochondrion inner membrane. Its pathway is energy metabolism; oxidative phosphorylation. Its function is as follows. Component of the cytochrome c oxidase, the last enzyme in the mitochondrial electron transport chain which drives oxidative phosphorylation. The respiratory chain contains 3 multisubunit complexes succinate dehydrogenase (complex II, CII), ubiquinol-cytochrome c oxidoreductase (cytochrome b-c1 complex, complex III, CIII) and cytochrome c oxidase (complex IV, CIV), that cooperate to transfer electrons derived from NADH and succinate to molecular oxygen, creating an electrochemical gradient over the inner membrane that drives transmembrane transport and the ATP synthase. Cytochrome c oxidase is the component of the respiratory chain that catalyzes the reduction of oxygen to water. Electrons originating from reduced cytochrome c in the intermembrane space (IMS) are transferred via the dinuclear copper A center (CU(A)) of subunit 2 and heme A of subunit 1 to the active site in subunit 1, a binuclear center (BNC) formed by heme A3 and copper B (CU(B)). The BNC reduces molecular oxygen to 2 water molecules using 4 electrons from cytochrome c in the IMS and 4 protons from the mitochondrial matrix. The sequence is that of Cytochrome c oxidase subunit 5B liver, mitochondrial from Oncorhynchus mykiss (Rainbow trout).